The primary structure comprises 293 residues: Heterogeneous nuclear ribonucleoprotein D-like-A (293 aa).

The disordered stretch occupies residues 1-21 (MAGFGAAPDFNEGSKINASKN). 2 RRM domains span residues 26 to 108 (GKMF…KGKE) and 111 to 188 (KKVF…AAQP). Disordered regions lie at residues 193-224 (RQQQ…GWNQ) and 274-293 (QSTY…YQPY). Residues 202 to 222 (GGRGAVTGRGGTRGRGRGQGW) show a composition bias toward gly residues.

The protein resides in the nucleus. Its subcellular location is the cytoplasm. In terms of biological role, acts as a transcriptional regulator. Binds DNA and RNA. This is Heterogeneous nuclear ribonucleoprotein D-like-A (hnrnpdl-a) from Xenopus laevis (African clawed frog).